A 295-amino-acid polypeptide reads, in one-letter code: Protein U26 (295 aa).

8 helical membrane passes run 4-24 (LTDSFILGLAKGAVIPGLYTF), 31-51 (SPLGQIGVLITVAISFLLTFK), 66-86 (IVFLSLMAPKLPSLLSAVVMI), 103-123 (VMIMPSYSPAVFTGIMVSLFF), 183-203 (FTVEFLLLFTMLWIGKMFLSM), 218-238 (VFFKLNVFKAAACAVVAILSG), 243-263 (VCLYRIIFEAFVGLGFSSIML), and 274-294 (FYAGDLLNGFFCLVVCCMYFG).

Its subcellular location is the membrane. The polypeptide is Protein U26 (U26) (Human herpesvirus 6A (strain Uganda-1102) (HHV-6 variant A)).